Consider the following 687-residue polypeptide: UvrABC system protein B (687 aa).

The 389-residue stretch at 26-414 (EGLAAGEMYQ…GAVIEQVVRP (389 aa)) folds into the Helicase ATP-binding domain. 39-46 (GVTGSGKT) lines the ATP pocket. Residues 92-115 (YYDYYQPEAYVPASDTYIGKDASV) carry the Beta-hairpin motif. In terms of domain architecture, Helicase C-terminal spans 430-596 (QVDDLLSEIR…GIQKAVREII (167 aa)). The UVR domain maps to 630–665 (AKRLQQLERQMHKHAQNLEFEQAARLRDEIKRIKGW).

This sequence belongs to the UvrB family. As to quaternary structure, forms a heterotetramer with UvrA during the search for lesions. Interacts with UvrC in an incision complex.

It is found in the cytoplasm. Functionally, the UvrABC repair system catalyzes the recognition and processing of DNA lesions. A damage recognition complex composed of 2 UvrA and 2 UvrB subunits scans DNA for abnormalities. Upon binding of the UvrA(2)B(2) complex to a putative damaged site, the DNA wraps around one UvrB monomer. DNA wrap is dependent on ATP binding by UvrB and probably causes local melting of the DNA helix, facilitating insertion of UvrB beta-hairpin between the DNA strands. Then UvrB probes one DNA strand for the presence of a lesion. If a lesion is found the UvrA subunits dissociate and the UvrB-DNA preincision complex is formed. This complex is subsequently bound by UvrC and the second UvrB is released. If no lesion is found, the DNA wraps around the other UvrB subunit that will check the other stand for damage. This chain is UvrABC system protein B, found in Nitrosococcus oceani (strain ATCC 19707 / BCRC 17464 / JCM 30415 / NCIMB 11848 / C-107).